Reading from the N-terminus, the 396-residue chain is CCA-adding enzyme (396 aa).

Residues glycine 27 and arginine 30 each coordinate ATP. Positions 27 and 30 each coordinate CTP. Mg(2+)-binding residues include aspartate 40 and aspartate 42. 5 residues coordinate ATP: arginine 111, aspartate 154, arginine 157, arginine 160, and arginine 163. The CTP site is built by arginine 111, aspartate 154, arginine 157, arginine 160, and arginine 163.

It belongs to the tRNA nucleotidyltransferase/poly(A) polymerase family. Bacterial CCA-adding enzyme type 3 subfamily. In terms of assembly, homodimer. Mg(2+) is required as a cofactor.

It catalyses the reaction a tRNA precursor + 2 CTP + ATP = a tRNA with a 3' CCA end + 3 diphosphate. It carries out the reaction a tRNA with a 3' CCA end + 2 CTP + ATP = a tRNA with a 3' CCACCA end + 3 diphosphate. In terms of biological role, catalyzes the addition and repair of the essential 3'-terminal CCA sequence in tRNAs without using a nucleic acid template. Adds these three nucleotides in the order of C, C, and A to the tRNA nucleotide-73, using CTP and ATP as substrates and producing inorganic pyrophosphate. tRNA 3'-terminal CCA addition is required both for tRNA processing and repair. Also involved in tRNA surveillance by mediating tandem CCA addition to generate a CCACCA at the 3' terminus of unstable tRNAs. While stable tRNAs receive only 3'-terminal CCA, unstable tRNAs are marked with CCACCA and rapidly degraded. This chain is CCA-adding enzyme, found in Bacillus velezensis (strain DSM 23117 / BGSC 10A6 / LMG 26770 / FZB42) (Bacillus amyloliquefaciens subsp. plantarum).